Consider the following 226-residue polypeptide: Uracil-DNA glycosylase (226 aa).

Asp64 acts as the Proton acceptor in catalysis.

Belongs to the uracil-DNA glycosylase (UDG) superfamily. UNG family.

It is found in the cytoplasm. It carries out the reaction Hydrolyzes single-stranded DNA or mismatched double-stranded DNA and polynucleotides, releasing free uracil.. Functionally, excises uracil residues from the DNA which can arise as a result of misincorporation of dUMP residues by DNA polymerase or due to deamination of cytosine. In Photorhabdus laumondii subsp. laumondii (strain DSM 15139 / CIP 105565 / TT01) (Photorhabdus luminescens subsp. laumondii), this protein is Uracil-DNA glycosylase.